The following is a 569-amino-acid chain: Thiol:disulfide interchange protein DsbD (569 aa).

Positions 1 to 19 (MAQRILTLILLLCSTSAFA) are cleaved as a signal peptide. 2 disulfide bridges follow: cysteine 122–cysteine 128 and cysteine 187–cysteine 309. The next 7 membrane-spanning stretches (helical) occupy residues 168-188 (LPFSALWALLIGIGIAFTPCV), 213-233 (LLTFIYVQGMALTYTALGLVV), 248-268 (YVLIGLALVFTLLALSMFGLF), 301-321 (IAGLICSPCTTAPLSAILLYI), 328-348 (WLGGGTLYLYALGMGLPLILI), 362-382 (WMEHVKTAFGFVILALPVFLL), and 391-411 (GLRLWSLLGVAFFGWAFITSL). The region spanning 430–569 (LVSVRPLQDW…FSAHLRDRQP (140 aa)) is the Thioredoxin domain. A disulfide bond links cysteine 484 and cysteine 487.

This sequence belongs to the thioredoxin family. DsbD subfamily.

It is found in the cell inner membrane. It carries out the reaction [protein]-dithiol + NAD(+) = [protein]-disulfide + NADH + H(+). The catalysed reaction is [protein]-dithiol + NADP(+) = [protein]-disulfide + NADPH + H(+). In terms of biological role, required to facilitate the formation of correct disulfide bonds in some periplasmic proteins and for the assembly of the periplasmic c-type cytochromes. Acts by transferring electrons from cytoplasmic thioredoxin to the periplasm. This transfer involves a cascade of disulfide bond formation and reduction steps. This Citrobacter koseri (strain ATCC BAA-895 / CDC 4225-83 / SGSC4696) protein is Thiol:disulfide interchange protein DsbD.